Consider the following 975-residue polypeptide: Glycine dehydrogenase (decarboxylating) (975 aa).

K723 is subject to N6-(pyridoxal phosphate)lysine.

It belongs to the GcvP family. As to quaternary structure, the glycine cleavage system is composed of four proteins: P, T, L and H. It depends on pyridoxal 5'-phosphate as a cofactor.

The enzyme catalyses N(6)-[(R)-lipoyl]-L-lysyl-[glycine-cleavage complex H protein] + glycine + H(+) = N(6)-[(R)-S(8)-aminomethyldihydrolipoyl]-L-lysyl-[glycine-cleavage complex H protein] + CO2. The glycine cleavage system catalyzes the degradation of glycine. The P protein binds the alpha-amino group of glycine through its pyridoxal phosphate cofactor; CO(2) is released and the remaining methylamine moiety is then transferred to the lipoamide cofactor of the H protein. This Burkholderia pseudomallei (strain 668) protein is Glycine dehydrogenase (decarboxylating).